A 131-amino-acid polypeptide reads, in one-letter code: Small ribosomal subunit protein uS8 (131 aa).

The protein belongs to the universal ribosomal protein uS8 family. As to quaternary structure, part of the 30S ribosomal subunit. Contacts proteins S5 and S12.

In terms of biological role, one of the primary rRNA binding proteins, it binds directly to 16S rRNA central domain where it helps coordinate assembly of the platform of the 30S subunit. This chain is Small ribosomal subunit protein uS8, found in Campylobacter jejuni (strain RM1221).